The primary structure comprises 1410 residues: Condensin-1 complex subunit CAP-D2 (1410 aa).

The segment covering 469-480 (LEPTEHASKEST) has biased composition (basic and acidic residues). 4 disordered regions span residues 469–492 (LEPT…DGEI), 504–525 (HQDS…EKDV), 860–879 (KTKK…NLEA), and 1208–1410 (KEQE…GSRS). Residues 869 to 879 (ESQNTEENLEA) show a composition bias toward polar residues. Basic and acidic residues predominate over residues 1208–1226 (KEQEETARNAEVHREKTKT). Acidic residues-rich tracts occupy residues 1240 to 1284 (PVEE…EEPD) and 1306 to 1319 (IETE…DSEP). The segment covering 1323–1339 (QCGTTNPRSLNRKTSGD) has biased composition (polar residues). The segment covering 1342–1365 (IETESEEEQSDSEEEPSDSEEEPD) has biased composition (acidic residues). The segment covering 1368–1379 (QCGTTNPRSLNQ) has biased composition (polar residues).

This sequence belongs to the CND1 (condensin subunit 1) family. As to quaternary structure, component of the condensin complex. Present in buds.

It localises to the chromosome. The protein localises to the nucleus. Functionally, essential protein. Regulatory subunit of the condensin complex, a complex required for conversion of interphase chromatin into mitotic-like condense chromosomes. The condensin complex probably introduces positive supercoils into relaxed DNA in the presence of type I topoisomerases and converts nicked DNA into positive knotted forms in the presence of type II topoisomerases. Required for fertility, growth and euchromatin organization, but not for sister chromatid cohesion. Necessary to maintain normal structural integrity of the meiotic chromosomes during the two nuclear divisions of gametogenesis, especially to maintain compaction of the centromeric repeats and 45S rDNA. Also seems to be involved in crossover formation during meiotic prophase I. Prevents centromeric and pericentromeric heterochromatin repeats association. Contributes to the induction of stress-responsive genes in response to stress treatment. In Arabidopsis thaliana (Mouse-ear cress), this protein is Condensin-1 complex subunit CAP-D2.